A 335-amino-acid chain; its full sequence is UPF0324 membrane protein LMOf2365_2179 (335 aa).

The next 8 helical transmembrane spans lie at 10-28 (TFWY…SYFL), 33-55 (FLMI…ALFP), 91-113 (AGWR…VYFL), 123-142 (LAIL…VVAI), 155-177 (VAAT…IYPI), 251-270 (VPWF…FGII), 277-299 (FLVI…NVHL), and 309-331 (PFAA…VLLF).

This sequence belongs to the UPF0324 family.

It localises to the cell membrane. In Listeria monocytogenes serotype 4b (strain F2365), this protein is UPF0324 membrane protein LMOf2365_2179.